Reading from the N-terminus, the 450-residue chain is Neuronal acetylcholine receptor subunit alpha-10 (450 aa).

Positions 1 to 24 (MGLRSHHLSLGLLLLFLLPAECLG) are cleaved as a signal peptide. Residues 25 to 237 (AEGRLALKLF…FTLLLRRRAA (213 aa)) are Extracellular-facing. Asparagine 40 and asparagine 56 each carry an N-linked (GlcNAc...) asparagine glycan. Intrachain disulfides connect cysteine 154–cysteine 168 and cysteine 218–cysteine 219. 3 consecutive transmembrane segments (helical) span residues 238–258 (AYVC…PLAF), 268–288 (VSLG…LAES), and 302–322 (YMAT…IMNL). The Cytoplasmic segment spans residues 323 to 428 (HYCGPSVRPV…WKRLARVMDR (106 aa)). The tract at residues 355 to 380 (EPCGQSRPPELSPSPQSPEGGAGPPA) is disordered. A helical transmembrane segment spans residues 429–449 (FFLAIFFSMALVMSLLVLVQA).

It belongs to the ligand-gated ion channel (TC 1.A.9) family. Acetylcholine receptor (TC 1.A.9.1) subfamily. Alpha-10/CHRNA10 sub-subfamily. In terms of assembly, forms homo- or heterooligomeric channels in conjunction with CHRNA10. The native outer hair cell receptor may be composed of CHRNA9:CHRNA10 heterooligomers. Found in the stoichiometric form (CHRNA9)2:(CHRNA10)3. In terms of tissue distribution, expressed in inner-ear tissue, tonsil, immortalized B-cells, cultured T-cells and peripheral blood lymphocytes.

The protein localises to the synaptic cell membrane. It localises to the cell membrane. It catalyses the reaction Ca(2+)(in) = Ca(2+)(out). It carries out the reaction K(+)(in) = K(+)(out). The enzyme catalyses Na(+)(in) = Na(+)(out). The catalysed reaction is Mg(2+)(in) = Mg(2+)(out). Its activity is regulated as follows. Activated by a myriad of ligands such as acetylcholine. AChR activity is inhibited by the antagonists alpha-conotoxins RgIA and GeXXA, small disulfide-constrained peptides from cone snails. Component of neuronal acetylcholine receptors (nAChRs) that function as pentameric, ligand-gated cation channels with high calcium permeability. nAChRs are excitatory neurotrasnmitter receptors formed by a collection of nAChR subunits. Each nAchR subunit confers differential attributes to channel properties, including activation, deactivation and desensitization kinetics, pH sensitivity, cation permeability, and binding to allosteric modulators. Forms heteropentamers with CHRNA9. Expressed in the inner ear, in sympathetic neurons and in other non-neuronal cells, such as skin keratinocytes and lymphocytes. nAChR formed by CHRNA9:CHRNA10 is involved in modulation of auditory stimuli. The channel is permeable to a range of divalent cations including calcium, the influx of which may activate a potassium current which hyperpolarizes the cell membrane. In the ear, mediates synaptic transmission between efferent olivocochlear fibers and hair cells of the cochlea, this may lead to a reduction in basilar membrane motion, altering the activity of auditory nerve fibers and reducing the range of dynamic hearing. This may protect against acoustic trauma. May also regulate keratinocyte adhesion. In Homo sapiens (Human), this protein is Neuronal acetylcholine receptor subunit alpha-10.